The following is a 475-amino-acid chain: MVKTNLNKGYVTQIIGPVLDIKFSEGNLPPIYSAIKIILDDNTETIVEVQQLLGDNKVRAVSMRSTDGLKRGVEAIDLGTPINVPVGTPTLGRIFNVIGEPVDEQGEVKYDETLPIHRDAPAFTELETKPSIFETGIKVVDLLAPYRRGGKIGLFGGAGVGKTVLIMELINNIAKAHGGVSVFGGVGERTREGNDLYEEMKESGVINEKNFAESKVALVYGQMNEPPGARMRVGLTALTMAEYFRDVNKQDVLLFIDNIFRFTQAGSEVSALLGRMPSAVGYQPTLATEMGALQERITSTTQGSITSIQAVYVPADDLTDPAPATTFAHLDATTVLSRGLAAKGIYPAVDPLDSTSTMLQVGIVTEEHYATAENVKETLQRYKELQDIIAILGIDELSEEDRLTVARARKVERFLSQPFFVAEIFTGSPGEYVSLEDTIKGFLMVLNGELDDLPEQAFYLVGNIDQAIAKAETLK.

Position 156 to 163 (156 to 163 (GGAGVGKT)) interacts with ATP.

The protein belongs to the ATPase alpha/beta chains family. In terms of assembly, F-type ATPases have 2 components, CF(1) - the catalytic core - and CF(0) - the membrane proton channel. CF(1) has five subunits: alpha(3), beta(3), gamma(1), delta(1), epsilon(1). CF(0) has four main subunits: a(1), b(1), b'(1) and c(9-12).

It is found in the plastid. Its subcellular location is the chloroplast thylakoid membrane. The catalysed reaction is ATP + H2O + 4 H(+)(in) = ADP + phosphate + 5 H(+)(out). In terms of biological role, produces ATP from ADP in the presence of a proton gradient across the membrane. The catalytic sites are hosted primarily by the beta subunits. The polypeptide is ATP synthase subunit beta, chloroplastic (Phaeodactylum tricornutum (strain CCAP 1055/1)).